Here is a 402-residue protein sequence, read N- to C-terminus: Propionate kinase (402 aa).

ATP is bound by residues asparagine 11 and lysine 18. Mg(2+) is bound at residue asparagine 11. Arginine 86 contributes to the substrate binding site. Aspartate 143 serves as the catalytic Proton donor/acceptor. ATP is bound by residues histidine 175, 203–207 (HLGNG), 278–280 (DLR), and 326–330 (GIGEN).

The protein belongs to the acetokinase family. TdcD subfamily. As to quaternary structure, homodimer. Mg(2+) serves as cofactor.

It carries out the reaction propanoate + ATP = propanoyl phosphate + ADP. It participates in amino-acid degradation; L-threonine degradation via propanoate pathway; propanoate from L-threonine: step 4/4. Functionally, catalyzes the conversion of propionyl phosphate and ADP to propionate and ATP. In Salmonella agona (strain SL483), this protein is Propionate kinase.